The sequence spans 125 residues: MNSLEQAEDLKAFERRLTEYIHCLQPATGRWRMLLIVVSVCTATGAWNWLIDPETQKVSFFTSLWNHPFFTISCITLIGLFFAGIHKRVVAPSIIAARCRTVLAEYNMSCDDTGKLILKPRPHVQ.

An N-acetylmethionine modification is found at Met-1. The next 2 membrane-spanning stretches (helical) occupy residues 33–53 and 65–85; these read MLLI…LIDP and WNHP…FAGI.

This sequence belongs to the CNEP1R1 family. In terms of assembly, interacts with CTDNEP1; the complex dephosphorylates LPIN1 and LPIN2.

The protein localises to the nucleus membrane. Its subcellular location is the cytoplasm. In terms of biological role, forms with the serine/threonine protein phosphatase CTDNEP1 an active complex which dephosphorylates and may activate LPIN1 and LPIN2. LPIN1 and LPIN2 are phosphatidate phosphatases that catalyze the conversion of phosphatidic acid to diacylglycerol and control the metabolism of fatty acids at different levels. May indirectly modulate the lipid composition of nuclear and/or endoplasmic reticulum membranes and be required for proper nuclear membrane morphology and/or dynamics. May also indirectly regulate the production of lipid droplets and triacylglycerol. The polypeptide is Nuclear envelope phosphatase-regulatory subunit 1 (CNEP1R1) (Bos taurus (Bovine)).